The following is a 226-amino-acid chain: MMTNLFSVFDPSTTILNLSLNWLSTFLGLLLIPFSFWLLPNRFQVVWNNILLTLHKEFKTLLGPSGHNGSTLMFISLFSLIMFNNFLGLFPYIFTSTSHLTLTLALAFPLWLSFMLYGWINHTQHMFAHLVPQGTPPVLMPFMVCIETISNVIRPGTLAVRLTANMIAGHLLLTLLGNTGPMTTNYIILSLILTTQIALLVLESAVAIIQSYVFAVLSTLYSSEVN.

The next 5 membrane-spanning stretches (helical) occupy residues 20–40 (LNWL…WLLP), 74–94 (FISL…PYIF), 100–120 (LTLT…YGWI), 158–180 (LAVR…GNTG), and 197–217 (IALL…FAVL).

It belongs to the ATPase A chain family. F-type ATPases have 2 components, CF(1) - the catalytic core - and CF(0) - the membrane proton channel. CF(1) has five subunits: alpha(3), beta(3), gamma(1), delta(1), epsilon(1). CF(0) has three main subunits: a, b and c.

The protein resides in the mitochondrion inner membrane. In terms of biological role, mitochondrial membrane ATP synthase (F(1)F(0) ATP synthase or Complex V) produces ATP from ADP in the presence of a proton gradient across the membrane which is generated by electron transport complexes of the respiratory chain. F-type ATPases consist of two structural domains, F(1) - containing the extramembraneous catalytic core and F(0) - containing the membrane proton channel, linked together by a central stalk and a peripheral stalk. During catalysis, ATP synthesis in the catalytic domain of F(1) is coupled via a rotary mechanism of the central stalk subunits to proton translocation. Key component of the proton channel; it may play a direct role in the translocation of protons across the membrane. This is ATP synthase subunit a (ATP6) from Anopheles quadrimaculatus (Common malaria mosquito).